The sequence spans 249 residues: 23S rRNA (guanosine-2'-O-)-methyltransferase RlmB (249 aa).

Positions 200, 220, and 229 each coordinate S-adenosyl-L-methionine.

This sequence belongs to the class IV-like SAM-binding methyltransferase superfamily. RNA methyltransferase TrmH family. RlmB subfamily.

Its subcellular location is the cytoplasm. It carries out the reaction guanosine(2251) in 23S rRNA + S-adenosyl-L-methionine = 2'-O-methylguanosine(2251) in 23S rRNA + S-adenosyl-L-homocysteine + H(+). In terms of biological role, specifically methylates the ribose of guanosine 2251 in 23S rRNA. In Xanthomonas axonopodis pv. citri (strain 306), this protein is 23S rRNA (guanosine-2'-O-)-methyltransferase RlmB.